The chain runs to 487 residues: Glutamyl-tRNA(Gln) amidotransferase subunit A (487 aa).

Active-site charge relay system residues include Lys-74 and Ser-149. Ser-173 functions as the Acyl-ester intermediate in the catalytic mechanism.

Belongs to the amidase family. GatA subfamily. As to quaternary structure, heterotrimer of A, B and C subunits.

The enzyme catalyses L-glutamyl-tRNA(Gln) + L-glutamine + ATP + H2O = L-glutaminyl-tRNA(Gln) + L-glutamate + ADP + phosphate + H(+). Functionally, allows the formation of correctly charged Gln-tRNA(Gln) through the transamidation of misacylated Glu-tRNA(Gln) in organisms which lack glutaminyl-tRNA synthetase. The reaction takes place in the presence of glutamine and ATP through an activated gamma-phospho-Glu-tRNA(Gln). This Prochlorococcus marinus (strain MIT 9211) protein is Glutamyl-tRNA(Gln) amidotransferase subunit A.